Reading from the N-terminus, the 139-residue chain is Lysozyme (139 aa).

The first 19 residues, 1-19 (MTKYVILLAVLAFALHCDA), serve as a signal peptide directing secretion. In terms of domain architecture, C-type lysozyme spans 20–139 (KRFTRCGLVQ…QHGLPDISDC (120 aa)). 4 disulfides stabilise this stretch: cysteine 25-cysteine 139, cysteine 46-cysteine 129, cysteine 81-cysteine 95, and cysteine 91-cysteine 109. Catalysis depends on residues glutamate 51 and aspartate 69.

This sequence belongs to the glycosyl hydrolase 22 family.

The enzyme catalyses Hydrolysis of (1-&gt;4)-beta-linkages between N-acetylmuramic acid and N-acetyl-D-glucosamine residues in a peptidoglycan and between N-acetyl-D-glucosamine residues in chitodextrins.. Lysozymes have primarily a bacteriolytic function; those in tissues and body fluids are associated with the monocyte-macrophage system and enhance the activity of immunoagents. The polypeptide is Lysozyme (Hyalophora cecropia (Cecropia moth)).